Consider the following 155-residue polypeptide: MSKIILDLQVACDHRCNLPSEDLFMYWLYMVLPLFRKKAEVTIRLVDEAESYNLNKIYRGQNHSTNVLSFPFKAPSPVKLVLLGDIIICRQVVEREAQEQNKILEAYWAHMVIHGSLHLLGYDHFIEQNAKKMEYLETKIMHKLGYLNPYETEIS.

H114, H118, and H124 together coordinate Zn(2+).

This sequence belongs to the endoribonuclease YbeY family. Zn(2+) is required as a cofactor.

The protein localises to the cytoplasm. Its function is as follows. Single strand-specific metallo-endoribonuclease involved in late-stage 70S ribosome quality control and in maturation of the 3' terminus of the 16S rRNA. The protein is Endoribonuclease YbeY of Baumannia cicadellinicola subsp. Homalodisca coagulata.